Here is a 3567-residue protein sequence, read N- to C-terminus: Sushi, von Willebrand factor type A, EGF and pentraxin domain-containing protein 1 (3567 aa).

Positions 1-17 (MWSRLAFCCWALALVSG) are cleaved as a signal peptide. A VWFA domain is found at 84 to 265 (ELVFLVDESS…LARRALHEDL (182 aa)). N-linked (GlcNAc...) asparagine glycosylation is present at asparagine 187. Sushi domains are found at residues 377 to 436 (VHCP…FCRV), 437 to 496 (RTCP…RCVE), and 497 to 561 (RHCA…VCKD). 6 cysteine pairs are disulfide-bonded: cysteine 379-cysteine 421, cysteine 407-cysteine 434, cysteine 439-cysteine 481, cysteine 467-cysteine 494, cysteine 499-cysteine 544, and cysteine 530-cysteine 559. HYR domains lie at 560–644 (KDVE…KVID) and 645–724 (VEPP…VIKG). In terms of domain architecture, Sushi 4 spans 725–789 (SPCEVPFTPV…YSTEWPDCAI (65 aa)). Intrachain disulfides connect cysteine 727-cysteine 769, cysteine 753-cysteine 787, cysteine 1196-cysteine 1207, cysteine 1201-cysteine 1216, cysteine 1218-cysteine 1227, cysteine 1234-cysteine 1245, cysteine 1239-cysteine 1254, cysteine 1256-cysteine 1265, cysteine 1272-cysteine 1283, cysteine 1277-cysteine 1292, cysteine 1294-cysteine 1303, cysteine 1310-cysteine 1321, cysteine 1315-cysteine 1330, cysteine 1332-cysteine 1341, cysteine 1348-cysteine 1359, cysteine 1353-cysteine 1368, cysteine 1370-cysteine 1379, cysteine 1386-cysteine 1397, cysteine 1391-cysteine 1406, and cysteine 1408-cysteine 1417. The region spanning 1192-1228 (VFHECFLNPCHNSGTCQQLGRGYVCLCPPGYTGLKCE) is the EGF-like 1 domain. The 37-residue stretch at 1230-1266 (DIDECSSLPCLNGGICRDQVGGFTCECSLGYSGQICE) folds into the EGF-like 2; calcium-binding domain. In terms of domain architecture, EGF-like 3; calcium-binding spans 1268-1304 (NINECISSPCLNKGTCTDGLASYRCTCVKGYMGVHCE). An EGF-like 4; calcium-binding domain is found at 1306-1342 (DVNECQSSPCLNNAVCKDQVGGFSCKCPPGFLGTRCE). Residues 1344 to 1380 (NVDECLSQPCQNGATCKDGANSFRCQCPAGFTGTHCE) form the EGF-like 5; calcium-binding domain. One can recognise an EGF-like 6; calcium-binding domain in the interval 1382–1418 (NINECQSNPCRNQATCVDELNSYSCKCQPGFSGHRCE). One can recognise a Pentraxin (PTX) domain in the interval 1423-1627 (SGFNLDFEVS…VKVDSSSMFC (205 aa)). Sushi domains lie at 1628 to 1686 (SDCP…HCER) and 1687 to 1744 (IRCG…SCLD). Disulfide bonds link cysteine 1630–cysteine 1671, cysteine 1657–cysteine 1684, cysteine 1689–cysteine 1729, cysteine 1715–cysteine 1742, cysteine 1748–cysteine 1760, cysteine 1754–cysteine 1769, cysteine 1771–cysteine 1782, cysteine 1788–cysteine 1828, cysteine 1814–cysteine 1841, cysteine 1846–cysteine 1886, cysteine 1872–cysteine 1899, cysteine 1904–cysteine 1944, cysteine 1930–cysteine 1957, cysteine 1962–cysteine 2002, cysteine 1988–cysteine 2015, cysteine 2020–cysteine 2060, cysteine 2046–cysteine 2077, cysteine 2082–cysteine 2125, cysteine 2111–cysteine 2140, cysteine 2145–cysteine 2185, cysteine 2171–cysteine 2198, cysteine 2203–cysteine 2244, cysteine 2230–cysteine 2258, cysteine 2263–cysteine 2303, cysteine 2289–cysteine 2317, cysteine 2322–cysteine 2362, cysteine 2348–cysteine 2375, cysteine 2380–cysteine 2421, cysteine 2407–cysteine 2434, cysteine 2439–cysteine 2479, cysteine 2465–cysteine 2492, cysteine 2497–cysteine 2537, cysteine 2523–cysteine 2550, cysteine 2555–cysteine 2595, and cysteine 2581–cysteine 2607. The EGF-like 7; calcium-binding domain maps to 1744–1783 (DVDECAVGSDCSEHASCLNTNGSYVCSCNPPYTGDGKNCA). 14 consecutive Sushi domains span residues 1780 to 1843 (KNCA…SCEA), 1844 to 1901 (ISCG…VCEL), 1902 to 1959 (VKCS…SCQL), 1960 to 2017 (VSCG…QCLA), 2018 to 2079 (VSCD…RCIA), 2080 to 2142 (HFCE…QCIP), 2143 to 2200 (VRCG…TCHP), 2201 to 2260 (VSCN…SCTP), 2261 to 2319 (LNCG…KCVP), 2320 to 2377 (TKCA…ICKM), 2378 to 2436 (VLCP…ECVP), 2437 to 2494 (VECP…MCKP), 2495 to 2552 (IECP…SCDA), and 2553 to 2609 (IHCS…TCVP). The interval 2638 to 2645 (DMMEVPYL) is important for the interaction with integrin ITGA9:ITGB1. 14 Sushi domains span residues 2660–2711 (NTKE…SCIS), 2712–2769 (IECD…RCEA), 2770–2827 (ISCS…MCIP), 2828–2885 (VDCG…SCMP), 2886–2943 (VRCP…VCKP), 2944–3001 (ATCG…SCLP), 3002–3057 (CRCS…LCEH), 3058–3115 (AQCG…TCEP), 3116–3174 (LSCG…TCSP), 3175–3234 (KKCP…SCIP), 3235–3292 (VVCG…VCRE), 3293–3350 (NRCE…LCKP), 3351–3409 (NPCP…RCEK), and 3410–3466 (ISCG…VCRA). Cystine bridges form between cysteine 2682–cysteine 2709, cysteine 2714–cysteine 2754, cysteine 2740–cysteine 2767, cysteine 2772–cysteine 2812, cysteine 2798–cysteine 2825, cysteine 2830–cysteine 2870, cysteine 2856–cysteine 2883, cysteine 2888–cysteine 2928, cysteine 2914–cysteine 2941, cysteine 2946–cysteine 2986, cysteine 2972–cysteine 2999, cysteine 3004–cysteine 3043, cysteine 3029–cysteine 3055, cysteine 3060–cysteine 3100, cysteine 3086–cysteine 3113, cysteine 3118–cysteine 3159, cysteine 3144–cysteine 3172, cysteine 3177–cysteine 3217, cysteine 3203–cysteine 3232, cysteine 3237–cysteine 3277, cysteine 3263–cysteine 3290, cysteine 3295–cysteine 3335, cysteine 3321–cysteine 3348, cysteine 3353–cysteine 3394, cysteine 3380–cysteine 3407, cysteine 3412–cysteine 3452, cysteine 3438–cysteine 3464, cysteine 3500–cysteine 3510, cysteine 3504–cysteine 3516, cysteine 3518–cysteine 3527, cysteine 3532–cysteine 3542, cysteine 3536–cysteine 3548, and cysteine 3550–cysteine 3559. 2 EGF-like domains span residues 3496–3528 (EEPI…SRCH) and 3529–3560 (TATC…HDCS).

Interacts (via Sushi domain 21) with ITGA9:ITGB1; thereby inhibits Ca(2+) intracellular signaling and as a result represses vasocontraction. Interacts (via Sushi domain 21) with ITGA4:ITGB1; thereby inhibits Ca(2+) intracellular signaling and as a result represses vasocontraction. Interacts with ANGPT1 and ANGPT2. Interacts with PEAR1 (via extracellular domain). Interacts with HSPG2, TLN1, FN1, COPA, CCT2, IQGAP1, LAMC1 and NID1. Interacts (via C-terminus) with TIE1. As to expression, expressed in the media layer of the arterial wall (at protein level). Highly expressed in lung and placenta, weakly expressed in the kidney, heart, brain and spleen. Also expressed in bone and periosteum, but not in cartilage and skeletal muscle.

It is found in the secreted. The protein localises to the nucleus. Its subcellular location is the cytoplasm. It localises to the membrane. Its function is as follows. Required for morphological development, cell alignment and migration of lymphatic endothelial cells during embryonic development, potentially via modulation of ANGPT2-TIE1 signaling and subsequent activation of FOXC2 transcription. Required for embryonic lymphatic vascular development, via mediating the correct formation of the first lymphovenous contact site and tight association of the lymphatic endothelium with the venous endothelium. Represses PRKCA-mediated L-type voltage-gated channel Ca(2+) influx and ROCK-mediated calcium sensitivity in vascular smooth muscle cells, via its interaction with integrins, thereby inhibiting vasocontraction. Promotes platelet activation, via its interaction with PEAR1 and subsequent activation of AKT/mTOR signaling. Plays a role in epidermal development and keratinocyte differentiation, independent of cell-cell adhesion. May play a role in initial cell attachment of stromal osteogenic cells. May promote myoblast cell adhesion when in the presence of integrin ITGA9:ITGB1. This chain is Sushi, von Willebrand factor type A, EGF and pentraxin domain-containing protein 1 (Svep1), found in Mus musculus (Mouse).